A 178-amino-acid chain; its full sequence is Gamma-crystallin S (178 aa).

S2 carries the N-acetylserine modification. The segment at 2–5 (SKTG) is N-terminal arm. Beta/gamma crystallin 'Greek key' domains lie at 6 to 44 (AKIS…RVEG) and 45 to 87 (GTWA…RAVH). A connecting peptide region spans residues 88-93 (LSSGGQ). Beta/gamma crystallin 'Greek key' domains are found at residues 94–134 (YKIQ…KVLE) and 135–177 (GTWI…RRIV).

Belongs to the beta/gamma-crystallin family. In terms of assembly, monomer.

Functionally, crystallins are the dominant structural components of the vertebrate eye lens. The protein is Gamma-crystallin S (Crygs) of Rattus norvegicus (Rat).